Here is a 296-residue protein sequence, read N- to C-terminus: MYKIVSKKELTNNIFSMDIEAPRVAKSAKPGQFIIIKNDEKGERIPLTIADYDQEKGTVTIVFQTVGKGTKQLAAFNEGDHVADFVGPLGVPSEFIHEDIEELKKKNFIFVAGGVGAAPVYPQVKWMHEHGIAVDVILGSRNKDLLIYEEKLNKAAGNLYVTTDDGSYEFKGTGSDMLKELVNNQGKKYDHAIIIGPMIMMKFTSMLTKELGIPTTVSLNPIMVDGTGMCGACRVTVGGEVKFACVDGPEFDGHLVNYDESMRRQAMYKTEEGKAQLEVEEGNTHSHGGCGCRGDK.

In terms of domain architecture, FAD-binding FR-type spans 1–95 (MYKIVSKKEL…VGPLGVPSEF (95 aa)).

This is an uncharacterized protein from Clostridium beijerinckii (Clostridium MP).